A 432-amino-acid polypeptide reads, in one-letter code: MSNPVRFDRGHTDDLMSFLAASPSPYHAVTNAAERLEKAGFRQVAETDAWDSTSGGKYVVRGGALIAWYVPEGADPHTPFRIVGAHTDSPNLRVKPRPDSGAHGWRQIAVEIYGGPLLNSWLDRDLGLAGRLSLRDGSTRLVNIDRPLLRVPQLAIHLDRSVSTDGLKLDKQRHLQPIWGLGGDVRDGDLIAFLEAELGLSAGEVTGWDLMTHSVEAPSYLGRDNELLAGPRMDNLLSVHAGTAALTAVAAADASLAYIPVLAAFDHEENGSQSDTGADGPLLGSVLERSVFARSGSYEDRARAFAGSVCLSSDTGHAVHPNYAERHDPTHHPRAGGGPILKVNVNNRYATDGSGRAIFAAACEKANVPFQTFVSNNSMPCGTTIGPITAARHGIRTVDIGAAILSMHSARELCATDDPFLLANSLVAFLEG.

3 residues coordinate Zn(2+): His-86, His-157, and His-408.

This sequence belongs to the peptidase M18 family. It depends on Zn(2+) as a cofactor.

This Streptomyces avermitilis (strain ATCC 31267 / DSM 46492 / JCM 5070 / NBRC 14893 / NCIMB 12804 / NRRL 8165 / MA-4680) protein is Probable M18 family aminopeptidase 2.